A 575-amino-acid polypeptide reads, in one-letter code: Urease subunit alpha (575 aa).

One can recognise a Urease domain in the interval 138 to 575 (GAVDCHVHLI…LPMTQRYFLF (438 aa)). Residues H143, H145, and K226 each coordinate Ni(2+). N6-carboxylysine is present on K226. Substrate is bound at residue H228. Residues H255 and H281 each contribute to the Ni(2+) site. H329 acts as the Proton donor in catalysis. D369 is a binding site for Ni(2+).

This sequence belongs to the metallo-dependent hydrolases superfamily. Urease alpha subunit family. As to quaternary structure, heterotrimer of UreA (gamma), UreB (beta) and UreC (alpha) subunits. Three heterotrimers associate to form the active enzyme. It depends on Ni cation as a cofactor. Post-translationally, carboxylation allows a single lysine to coordinate two nickel ions.

Its subcellular location is the cytoplasm. The catalysed reaction is urea + 2 H2O + H(+) = hydrogencarbonate + 2 NH4(+). It functions in the pathway nitrogen metabolism; urea degradation; CO(2) and NH(3) from urea (urease route): step 1/1. This is Urease subunit alpha from Frankia casuarinae (strain DSM 45818 / CECT 9043 / HFP020203 / CcI3).